The primary structure comprises 635 residues: Threonine--tRNA ligase (635 aa).

In terms of domain architecture, TGS spans 1–61; sequence MIQITLPDNS…DHDARLQIIT (61 aa). Residues 242–533 are catalytic; the sequence is DHRKLGKELD…LIEHHAGALP (292 aa). Positions 333, 384, and 510 each coordinate Zn(2+).

Belongs to the class-II aminoacyl-tRNA synthetase family. Homodimer. Zn(2+) is required as a cofactor.

It is found in the cytoplasm. The enzyme catalyses tRNA(Thr) + L-threonine + ATP = L-threonyl-tRNA(Thr) + AMP + diphosphate + H(+). In terms of biological role, catalyzes the attachment of threonine to tRNA(Thr) in a two-step reaction: L-threonine is first activated by ATP to form Thr-AMP and then transferred to the acceptor end of tRNA(Thr). Also edits incorrectly charged L-seryl-tRNA(Thr). This Variovorax paradoxus (strain S110) protein is Threonine--tRNA ligase.